The primary structure comprises 326 residues: Tetraketide alpha-pyrone reductase 1 (326 aa).

NADP(+) contacts are provided by residues 8-32 (VCVTGASGFLASWLVKRLLLEGYEV), lysine 44, and tyrosine 162.

Belongs to the NAD(P)-dependent epimerase/dehydratase family. Dihydroflavonol-4-reductase subfamily. Interacts with 4CLL1/ACOS5, PKSA and PKSB. In terms of tissue distribution, specifically expressed in anther tapetal cells during microspores development.

The protein resides in the cytoplasm. It is found in the nucleus. The protein localises to the endoplasmic reticulum. Involved in the biosynthesis of hydroxylated tetraketide compounds that serve as sporopollenin precursors (the main constituents of exine). Is essential for pollen wall development. Acts on tetraketide alpha-pyrones and reduces the carbonyl function on the tetraketide alkyl chain to a secondary alcohol function. The polypeptide is Tetraketide alpha-pyrone reductase 1 (TKPR1) (Arabidopsis thaliana (Mouse-ear cress)).